Consider the following 401-residue polypeptide: Probable sodium/metabolite cotransporter BASS5, chloroplastic (401 aa).

A chloroplast-targeting transit peptide spans 1–46 (MAPNAAVLVRPHIAGVHHLPTGRRLPRLAPPQAVSPPFSRQKGSVV). The next 9 helical transmembrane spans lie at 93–113 (TIIPHVVLGSTILALVYPPSF), 122–142 (APALGFLMFAVGVNSSVKDFI), 159–179 (FIIKPFLGFLFGTLAVTIFNL), 185–205 (AGIMLVSCVSGAQLSNYATFL), 215–235 (IVMTSLSTATAVFVTPTLSYF), 247–267 (GMMSSIVQIVVAPIAAGLLLN), 273–293 (LCSAIQPFLPPLSVFVTALCV), 299–319 (INIKAVLSPFGLATVLLLFAF), and 372–392 (LVGVPPAISVVLMSLMGFALV).

Belongs to the bile acid:sodium symporter (BASS) (TC 2.A.28) family.

Its subcellular location is the membrane. The protein resides in the plastid. The protein localises to the chloroplast envelope. Functionally, may function as sodium-coupled metabolite transporter across the chloroplast envelope. This is Probable sodium/metabolite cotransporter BASS5, chloroplastic (BASS5) from Oryza sativa subsp. indica (Rice).